Here is a 283-residue protein sequence, read N- to C-terminus: F-box only protein 27 (283 aa).

The segment at Met1–Ala23 is disordered. Residues Ala23–Ile70 enclose the F-box domain. An FBA domain is found at Phe104–Val280.

Part of a SCF (SKP1-cullin-F-box) protein ligase complex. Interacts with SKP1 and CUL1. Predominantly expressed in brain, heart and kidney. Expressed at lower levels in liver and lung.

Functionally, substrate-recognition component of the SCF (SKP1-CUL1-F-box protein)-type E3 ubiquitin ligase complex. Able to recognize and bind denatured glycoproteins, which are modified with complex-type oligosaccharides. The polypeptide is F-box only protein 27 (FBXO27) (Homo sapiens (Human)).